We begin with the raw amino-acid sequence, 210 residues long: Flagellar transcriptional regulator FlhC (210 aa).

Positions 144, 147, 164, and 167 each coordinate Zn(2+).

The protein belongs to the FlhC family. As to quaternary structure, heterohexamer composed of two FlhC and four FlhD subunits. Each FlhC binds a FlhD dimer, forming a heterotrimer, and a hexamer assembles by dimerization of two heterotrimers. Requires Zn(2+) as cofactor.

Its subcellular location is the cytoplasm. Its function is as follows. Functions in complex with FlhD as a master transcriptional regulator that regulates transcription of several flagellar and non-flagellar operons by binding to their promoter region. Activates expression of class 2 flagellar genes, including fliA, which is a flagellum-specific sigma factor that turns on the class 3 genes. Also regulates genes whose products function in a variety of physiological pathways. The chain is Flagellar transcriptional regulator FlhC from Cupriavidus pinatubonensis (strain JMP 134 / LMG 1197) (Cupriavidus necator (strain JMP 134)).